A 584-amino-acid chain; its full sequence is 2-succinyl-5-enolpyruvyl-6-hydroxy-3-cyclohexene-1-carboxylate synthase (584 aa).

The protein belongs to the TPP enzyme family. MenD subfamily. Homodimer. Requires Mg(2+) as cofactor. The cofactor is Mn(2+). Thiamine diphosphate serves as cofactor.

The enzyme catalyses isochorismate + 2-oxoglutarate + H(+) = 5-enolpyruvoyl-6-hydroxy-2-succinyl-cyclohex-3-ene-1-carboxylate + CO2. The protein operates within quinol/quinone metabolism; 1,4-dihydroxy-2-naphthoate biosynthesis; 1,4-dihydroxy-2-naphthoate from chorismate: step 2/7. It participates in quinol/quinone metabolism; menaquinone biosynthesis. Catalyzes the thiamine diphosphate-dependent decarboxylation of 2-oxoglutarate and the subsequent addition of the resulting succinic semialdehyde-thiamine pyrophosphate anion to isochorismate to yield 2-succinyl-5-enolpyruvyl-6-hydroxy-3-cyclohexene-1-carboxylate (SEPHCHC). The chain is 2-succinyl-5-enolpyruvyl-6-hydroxy-3-cyclohexene-1-carboxylate synthase from Bacillus anthracis.